The chain runs to 557 residues: Membrane protein insertase YidC (557 aa).

A helical transmembrane segment spans residues 7 to 27; the sequence is ILLVALAVVSYLLVLQWNQDY. The interval 42–77 is disordered; the sequence is ASPALPETVPGDSSTSADVPTAGSGNQVPDSAASTA. The span at 52 to 77 shows a compositional bias: polar residues; the sequence is GDSSTSADVPTAGSGNQVPDSAASTA. A run of 3 helical transmembrane segments spans residues 370-390, 436-456, and 514-534; these read WGWSIIVLTVIIKLAFFPLSA, LGGCLPILVQMPVFLALYWVL, and PIIFTFFFLWFPAGLVLYWVV.

It belongs to the OXA1/ALB3/YidC family. Type 1 subfamily. As to quaternary structure, interacts with the Sec translocase complex via SecD. Specifically interacts with transmembrane segments of nascent integral membrane proteins during membrane integration.

The protein localises to the cell inner membrane. Its function is as follows. Required for the insertion and/or proper folding and/or complex formation of integral membrane proteins into the membrane. Involved in integration of membrane proteins that insert both dependently and independently of the Sec translocase complex, as well as at least some lipoproteins. Aids folding of multispanning membrane proteins. The protein is Membrane protein insertase YidC of Azotobacter vinelandii (strain DJ / ATCC BAA-1303).